The primary structure comprises 180 residues: Shikimate kinase (180 aa).

14–19 (GAGKTC) contributes to the ATP binding site. Threonine 18 is a binding site for Mg(2+). Substrate-binding residues include aspartate 36, arginine 60, and glycine 82. An ATP-binding site is contributed by arginine 120. Position 139 (arginine 139) interacts with substrate.

Belongs to the shikimate kinase family. As to quaternary structure, monomer. Mg(2+) serves as cofactor.

It is found in the cytoplasm. The enzyme catalyses shikimate + ATP = 3-phosphoshikimate + ADP + H(+). It participates in metabolic intermediate biosynthesis; chorismate biosynthesis; chorismate from D-erythrose 4-phosphate and phosphoenolpyruvate: step 5/7. Its function is as follows. Catalyzes the specific phosphorylation of the 3-hydroxyl group of shikimic acid using ATP as a cosubstrate. The chain is Shikimate kinase from Stenotrophomonas maltophilia (strain R551-3).